The sequence spans 76 residues: Acyl carrier protein (76 aa).

The Carrier domain maps to 2 to 76; the sequence is SNIEERVIKV…QSAIDFVKSR (75 aa). Serine 37 carries the O-(pantetheine 4'-phosphoryl)serine modification.

It belongs to the acyl carrier protein (ACP) family. 4'-phosphopantetheine is transferred from CoA to a specific serine of apo-ACP by AcpS. This modification is essential for activity because fatty acids are bound in thioester linkage to the sulfhydryl of the prosthetic group.

Its subcellular location is the cytoplasm. It functions in the pathway lipid metabolism; fatty acid biosynthesis. Functionally, carrier of the growing fatty acid chain in fatty acid biosynthesis. The protein is Acyl carrier protein of Dichelobacter nodosus (strain VCS1703A).